Consider the following 264-residue polypeptide: MKQYLDLLNRVLTEGTEKSDRTGTGTISVFGHQMRFNLDEGFPCLTTKKLHLKSIIYELLWFLQGDTNAKYLQEHGVRIWNEWADENGDLGHIYGYQWRSWPDYDGGFIDQISEAVETIKHNPDSRRIIVSAWNVADLKNMNLPPCHAFFQFYVADGRLSLQLYQRSADIFLGVPFNIASYALLLQMMAQVTGLKAGEFIHTLGDAHIYLNHLDQVKLQLSREPRALPQMKINPDVKSIYDFQFEDFELVNYDPHPHIAGIVAV.

Arg-21 provides a ligand contact to dUMP. His-51 serves as a coordination point for (6R)-5,10-methylene-5,6,7,8-tetrahydrofolate. 126–127 is a binding site for dUMP; the sequence is RR. The active-site Nucleophile is Cys-146. Residues 166–169, Asn-177, and 207–209 contribute to the dUMP site; these read RSAD and HIY. Asp-169 is a binding site for (6R)-5,10-methylene-5,6,7,8-tetrahydrofolate. Ala-263 contacts (6R)-5,10-methylene-5,6,7,8-tetrahydrofolate.

The protein belongs to the thymidylate synthase family. Bacterial-type ThyA subfamily. As to quaternary structure, homodimer.

The protein localises to the cytoplasm. The catalysed reaction is dUMP + (6R)-5,10-methylene-5,6,7,8-tetrahydrofolate = 7,8-dihydrofolate + dTMP. Its pathway is pyrimidine metabolism; dTTP biosynthesis. In terms of biological role, catalyzes the reductive methylation of 2'-deoxyuridine-5'-monophosphate (dUMP) to 2'-deoxythymidine-5'-monophosphate (dTMP) while utilizing 5,10-methylenetetrahydrofolate (mTHF) as the methyl donor and reductant in the reaction, yielding dihydrofolate (DHF) as a by-product. This enzymatic reaction provides an intracellular de novo source of dTMP, an essential precursor for DNA biosynthesis. This is Thymidylate synthase from Bacteroides thetaiotaomicron (strain ATCC 29148 / DSM 2079 / JCM 5827 / CCUG 10774 / NCTC 10582 / VPI-5482 / E50).